A 1433-amino-acid polypeptide reads, in one-letter code: DNA-directed RNA polymerase subunit beta' (1433 aa).

Zn(2+)-binding residues include cysteine 66, cysteine 68, cysteine 81, and cysteine 84. Mg(2+) contacts are provided by aspartate 473, aspartate 475, and aspartate 477. Positions 815, 889, 896, and 899 each coordinate Zn(2+).

This sequence belongs to the RNA polymerase beta' chain family. In terms of assembly, the RNAP catalytic core consists of 2 alpha, 1 beta, 1 beta' and 1 omega subunit. When a sigma factor is associated with the core the holoenzyme is formed, which can initiate transcription. Mg(2+) serves as cofactor. It depends on Zn(2+) as a cofactor.

It carries out the reaction RNA(n) + a ribonucleoside 5'-triphosphate = RNA(n+1) + diphosphate. Its function is as follows. DNA-dependent RNA polymerase catalyzes the transcription of DNA into RNA using the four ribonucleoside triphosphates as substrates. This chain is DNA-directed RNA polymerase subunit beta', found in Porphyromonas gingivalis (strain ATCC 33277 / DSM 20709 / CIP 103683 / JCM 12257 / NCTC 11834 / 2561).